A 173-amino-acid chain; its full sequence is MKSLFIASTMVLMAFPAFAESTTVKMYEALPTGPGKEVGTVVISEAPGGLHFKVNMEKLTPGYHGFHVHENPSCAPGEKDGKIVPALAAGGHYDPGNTHHHLGPEGDGHMGDLPRLSANADGKVSETVVAPHLKKLAEIKQRSLMVHVGGDNYSDKPEPLGGGGARFACGVIE.

The first 19 residues, 1–19 (MKSLFIASTMVLMAFPAFA), serve as a signal peptide directing secretion. Residues H67, H69, and H92 each coordinate Cu cation. C74 and C169 are disulfide-bonded. Zn(2+) is bound by residues H92, H101, H109, and D112. Residue H147 participates in Cu cation binding.

Belongs to the Cu-Zn superoxide dismutase family. Homodimer. Cu cation is required as a cofactor. It depends on Zn(2+) as a cofactor.

Its subcellular location is the periplasm. The enzyme catalyses 2 superoxide + 2 H(+) = H2O2 + O2. In terms of biological role, destroys radicals which are normally produced within the cells and which are toxic to biological systems. This chain is Superoxide dismutase [Cu-Zn] (sodC), found in Brucella abortus biovar 1 (strain 9-941).